A 551-amino-acid chain; its full sequence is Vacuolar protein sorting-associated protein 17 (551 aa).

A disordered region spans residues 1-100 (MTSAVPYDPY…SERVILPERS (100 aa)). Polar residues-rich tracts occupy residues 29-39 (AATTTDGSSSM) and 46-64 (TEQT…NIQN). The region spanning 108 to 227 (LLAKVTGLER…FFIESDFNTY (120 aa)) is the PX domain. Residues 359 to 385 (IMRNLVQAQQNSKAKQEQARRFRSRRD) are a coiled coil. The disordered stretch occupies residues 474 to 504 (RLGRHAVSNNNSDTSQTLKGDSWTGESNRKS). The segment covering 480–504 (VSNNNSDTSQTLKGDSWTGESNRKS) has biased composition (polar residues). Position 544 is a phosphoserine (serine 544).

Belongs to the VPS17 family. In terms of assembly, component of the retromer complex which consists of VPS29, VPS26, VPS35, VPS5 and VPS17. Component of a retromer subcomplex consisting of VPS5 and VPS17. In terms of processing, phosphorylated on one or more serine residues.

It is found in the endomembrane system. In terms of biological role, component of the membrane-associated retromer complex which is essential in endosome-to-Golgi retrograde transport. The VPS5-VPS17 subcomplex may assemble onto the membrane to promote vesicle formation and is required for recycling the vacuolar protein-sorting receptor. Required for the sorting and delivery of a subset of soluble vacuolar hydrolases. Required for retention of late Golgi membrane proteins and vacuolar biogenesis. Involved in vacuolar fragmentation during hyperosmotic stress. The polypeptide is Vacuolar protein sorting-associated protein 17 (Saccharomyces cerevisiae (strain ATCC 204508 / S288c) (Baker's yeast)).